The primary structure comprises 1310 residues: Multidrug resistance protein 4 (1310 aa).

The next 5 helical transmembrane spans lie at 48–68 (WLDL…GVLT), 125–145 (MVCF…CFFV), 196–216 (KFGI…IGFA), 223–243 (LVIM…AVFA), and 299–319 (GLTV…AFSL). The ABC transmembrane type-1 1 domain occupies 55–368 (AVGIFGSIGC…IAIPLNIFAT (314 aa)). A glycan (N-linked (GlcNAc...) asparagine) is linked at N336. A helical transmembrane segment spans residues 342–362 (VMIVFICVLIATQGLSIIAIP). A glycan (N-linked (GlcNAc...) asparagine) is linked at N402. The region spanning 403-642 (ITLEDVQFRY…KGTYYGLVKR (240 aa)) is the ABC transporter 1 domain. ATP is bound at residue 438-445 (GASGCGKS). N-linked (GlcNAc...) asparagine glycosylation occurs at N608. 2 helical membrane-spanning segments follow: residues 721–741 (WFLS…FPFF) and 773–793 (IIVV…IGLF). Residues 722 to 1030 (FLSTFGFIGG…LGNIVPDIGK (309 aa)) form the ABC transmembrane type-1 2 domain. N816 carries N-linked (GlcNAc...) asparagine glycosylation. 3 helical membrane passes run 849–869 (VGNV…AFYY), 871–891 (WKVS…VFIN), and 945–965 (IGIY…TLLT). The ABC transporter 2 domain maps to 1065-1304 (IEFKDICFRY…KGFYYTLAMQ (240 aa)). Position 1100–1107 (1100–1107 (GASGCGKS)) interacts with ATP.

The protein belongs to the ABC transporter superfamily. ABCB family. Multidrug resistance exporter (TC 3.A.1.201) subfamily.

It localises to the membrane. The enzyme catalyses ATP + H2O + xenobioticSide 1 = ADP + phosphate + xenobioticSide 2.. Energy-dependent efflux pump responsible for decreased drug accumulation in multidrug resistance parasites. The polypeptide is Multidrug resistance protein 4 (Entamoeba histolytica (strain ATCC 30459 / HM-1:IMSS / ABRM)).